Reading from the N-terminus, the 111-residue chain is Sulditoxin subunit B (111 aa).

Residues 1–19 form the signal peptide; that stretch reads MKTLLLALAVVVLVCLGSA. A propeptide spanning residues 20 to 34 is cleaved from the precursor; the sequence is NELGLGRQQIDRGRR. The residue at position 35 (Gln35) is a Pyrrolidone carboxylic acid. Intrachain disulfides connect Cys44/Cys68, Cys47/Cys55, Cys61/Cys87, Cys91/Cys102, and Cys103/Cys108.

Belongs to the three-finger toxin family. Ancestral subfamily. Boigatoxin sub-subfamily. As to quaternary structure, heterodimer of sulditoxin subunits A and B; probably disulfide-linked. In terms of tissue distribution, expressed by the venom gland.

It localises to the secreted. Functionally, reptile-specific neurotoxin (tested on geckos). Inhibits nicotinic acetylcholine receptor (nAChR). Not toxic to mammals (tested on mice). This Spilotes sulphureus (Amazon puffing snake) protein is Sulditoxin subunit B.